The chain runs to 453 residues: Tubulin alpha-2 chain (453 aa).

Residue Gln11 coordinates GTP. Position 40 is an N6-acetyllysine (Lys40). The GTP site is built by Glu71, Gly144, Thr145, Thr179, Asn206, and Asn228. Mg(2+) is bound at residue Glu71. Residue Glu254 is part of the active site. The interval 432 to 453 is disordered; the sequence is YEEVGAETAEGEGEEEDFGEEY.

It belongs to the tubulin family. Dimer of alpha and beta chains. A typical microtubule is a hollow water-filled tube with an outer diameter of 25 nm and an inner diameter of 15 nM. Alpha-beta heterodimers associate head-to-tail to form protofilaments running lengthwise along the microtubule wall with the beta-tubulin subunit facing the microtubule plus end conferring a structural polarity. Microtubules usually have 13 protofilaments but different protofilament numbers can be found in some organisms and specialized cells. Requires Mg(2+) as cofactor. Post-translationally, undergoes a tyrosination/detyrosination cycle, the cyclic removal and re-addition of a C-terminal tyrosine residue by the enzymes tubulin tyrosine carboxypeptidase (TTCP) and tubulin tyrosine ligase (TTL), respectively. Acetylation of alpha chains at Lys-40 stabilizes microtubules and affects affinity and processivity of microtubule motors. This modification has a role in multiple cellular functions, ranging from cell motility, cell cycle progression or cell differentiation to intracellular trafficking and signaling.

It localises to the cytoplasm. It is found in the cytoskeleton. It carries out the reaction GTP + H2O = GDP + phosphate + H(+). Functionally, tubulin is the major constituent of microtubules, a cylinder consisting of laterally associated linear protofilaments composed of alpha- and beta-tubulin heterodimers. Microtubules grow by the addition of GTP-tubulin dimers to the microtubule end, where a stabilizing cap forms. Below the cap, tubulin dimers are in GDP-bound state, owing to GTPase activity of alpha-tubulin. This Pelvetia fastigiata (Brown alga) protein is Tubulin alpha-2 chain (TUBA2).